A 1218-amino-acid polypeptide reads, in one-letter code: Protein STICHEL (1218 aa).

A disordered region spans residues 24–136 (AGRVLRDPGT…SDARNGGDSY (113 aa)). Polar residues-rich tracts occupy residues 32–46 (GTTS…SSRS), 54–73 (ASRN…SSTN), and 86–95 (WKTQKSSSEK). Residues 163 to 180 (RKSNVGSCKKKSKKKISS) carry the Bipartite nuclear localization signal motif. 2 short sequence motifs (PEST) span residues 273-304 (RNPS…LPGR) and 425-449 (RSQD…ETIR). 490-497 (GPRGTGKT) provides a ligand contact to ATP. Residues Cys509, Cys518, Cys521, and Cys524 each contribute to the Zn(2+) site. The stretch at 762–788 (EADMEGLKHALKLLSEAEKQLRVSNDR) forms a coiled coil. The tract at residues 802–828 (MPSPGTTHTGSSRRQSSRATDDDPASV) is disordered. A compositionally biased stretch (polar residues) spans 804–819 (SPGTTHTGSSRRQSSR). Short sequence motifs (bipartite nuclear localization signal) lie at residues 1178–1195 (RRSK…SRRN) and 1196–1213 (RKSR…RKAE).

The protein belongs to the DnaX/STICHEL family. In terms of assembly, interacts with BLT. As to expression, ubiquitous.

Its subcellular location is the nucleus. Functionally, acts as a key regulator of trichome branching through an endoreduplication-independent pathway. The chain is Protein STICHEL (STI) from Arabidopsis thaliana (Mouse-ear cress).